A 314-amino-acid polypeptide reads, in one-letter code: Thymidylate synthase (314 aa).

Residues R21 and 176–177 (RR) each bind dUMP. Residue C196 is the Nucleophile of the active site. Residues 216-219 (RSAD), N227, and 257-259 (HLY) contribute to the dUMP site. D219 provides a ligand contact to (6R)-5,10-methylene-5,6,7,8-tetrahydrofolate. Residue S313 participates in (6R)-5,10-methylene-5,6,7,8-tetrahydrofolate binding.

The protein belongs to the thymidylate synthase family. Bacterial-type ThyA subfamily. As to quaternary structure, homodimer.

The protein resides in the cytoplasm. The enzyme catalyses dUMP + (6R)-5,10-methylene-5,6,7,8-tetrahydrofolate = 7,8-dihydrofolate + dTMP. It functions in the pathway pyrimidine metabolism; dTTP biosynthesis. Catalyzes the reductive methylation of 2'-deoxyuridine-5'-monophosphate (dUMP) to 2'-deoxythymidine-5'-monophosphate (dTMP) while utilizing 5,10-methylenetetrahydrofolate (mTHF) as the methyl donor and reductant in the reaction, yielding dihydrofolate (DHF) as a by-product. This enzymatic reaction provides an intracellular de novo source of dTMP, an essential precursor for DNA biosynthesis. This chain is Thymidylate synthase, found in Listeria monocytogenes serotype 4a (strain HCC23).